The following is a 56-amino-acid chain: Alpha-conotoxin TxIA (56 aa).

Positions 1–16 (MFTVFLLVVLATAVVS) are cleaved as a signal peptide. Residues 17–39 (FTSDRASDDGKAAASDLITLTIK) constitute a propeptide that is removed on maturation. 2 cysteine pairs are disulfide-bonded: Cys41–Cys47 and Cys42–Cys55. The segment at 43-45 (SRP) is ser-Xaa-Pro motif, crucial for potent interaction with nAChR. 4-hydroxyproline; partial occurs at positions 45 and 46. Cys55 is subject to Cysteine amide.

This sequence belongs to the conotoxin A superfamily. Post-translationally, exists in 4 different forms, depending on hydroxylations. Tx1a-PP does not contain hydroxyproline, tx1a-OP has one hydroxyproline at position 45, tx1a-PO has one hydroxyproline at position 46, and tx1a-PP has two hydroxyprolines at positions 45 and 46. As to expression, expressed by the venom duct. Tx1a that containing 1 or 2 non-hydroxylated prolines are mostly present in part 5 of the venom duct (distal part near the pharynx), whereas tx1a-OO (with 2 hydroxyprolines) is mostly present in part 4 of the venom duct (follewed by part 3).

It localises to the secreted. Its function is as follows. Alpha-conotoxins act on postsynaptic membranes, they bind to the nicotinic acetylcholine receptors (nAChR) and thus inhibit them. This toxin inhibits rat alpha-3-beta-2/CHRNA3-CHRNB2 (IC(50)=3.5 nM), rat alpha-7/CHRNA7 (IC(50)=392 nM) nAChR, and the L.stagnalis soluble acetylcholine receptor (all tested without hydroxyproline). The sequence is that of Alpha-conotoxin TxIA from Conus textile (Cloth-of-gold cone).